Here is a 122-residue protein sequence, read N- to C-terminus: Small ribosomal subunit protein uS13 (122 aa).

The tract at residues 95–122 (GLPVRGQRTKTNARTRKGPKKTIAGKKK) is disordered.

It belongs to the universal ribosomal protein uS13 family. Part of the 30S ribosomal subunit. Forms a loose heterodimer with protein S19. Forms two bridges to the 50S subunit in the 70S ribosome.

Functionally, located at the top of the head of the 30S subunit, it contacts several helices of the 16S rRNA. In the 70S ribosome it contacts the 23S rRNA (bridge B1a) and protein L5 of the 50S subunit (bridge B1b), connecting the 2 subunits; these bridges are implicated in subunit movement. Contacts the tRNAs in the A and P-sites. The protein is Small ribosomal subunit protein uS13 of Corynebacterium aurimucosum (strain ATCC 700975 / DSM 44827 / CIP 107346 / CN-1) (Corynebacterium nigricans).